A 2547-amino-acid polypeptide reads, in one-letter code: Lovastatin diketide synthase mokB (2547 aa).

Residues 10 to 430 (PTPIAVVGMG…GANAHAIVER (421 aa)) enclose the Ketosynthase family 3 (KS3) domain. Catalysis depends on for beta-ketoacyl synthase activity residues Cys-183, His-318, and His-353. The tract at residues 545–890 (VFTGQGAQWF…MDLLQGGYPV (346 aa)) is acyl and malonyl transferase. The active-site For malonyltransferase activity is the Ser-635. An N-terminal hotdog fold region spans residues 941–1079 (HDLIGVQEPL…GLIRAQVDHP (139 aa)). The region spanning 941-1252 (HDLIGVQEPL…FQSLGAVISD (312 aa)) is the PKS/mFAS DH domain. His-973 serves as the catalytic Proton acceptor; for dehydratase activity. The tract at residues 973–985 (HVVGSRILFPGAG) is dehydratase-like. The segment at 1095-1252 (SRKMAPQDLW…FQSLGAVISD (158 aa)) is C-terminal hotdog fold. The Proton donor; for dehydratase activity role is filled by Asp-1160. Cysteines 1340 and 1379 form a disulfide. The interval 1510 to 1547 (YDVVLACQVLHATSNMQRTLNNVRKLLKPGGKLILVET) is methyltransferase. Positions 2459-2541 (ASTEEEATAL…EVAEVVVKKY (83 aa)) constitute a Carrier domain. Position 2501 is an O-(pantetheine 4'-phosphoryl)serine (Ser-2501).

Requires pantetheine 4'-phosphate as cofactor.

The catalysed reaction is holo-[2-methylbutanoate polyketide synthase] + 2 malonyl-CoA + S-adenosyl-L-methionine + 2 NADPH + 3 H(+) = (S)-2-methylbutanoyl-[2-methylbutanoate polyketide synthase] + S-adenosyl-L-homocysteine + 2 CO2 + 2 NADP(+) + 2 CoA + H2O. It participates in polyketide biosynthesis; lovastatin biosynthesis. Diketide synthase; part of the gene cluster that mediates the biosynthesis of monakolin K, also known as lovastatin, and which acts as a potent competitive inhibitor of HMG-CoA reductase. Monakolin K biosynthesis is performed in two stages. The first stage is catalyzed by the nonaketide synthase mokA, which belongs to type I polyketide synthases and catalyzes the iterative nine-step formation of the polyketide. This PKS stage completed by the action of dehydrogenase mokE, which catalyzes the NADPH-dependent reduction of the unsaturated tetra-, penta- and heptaketide intermediates that arise during the mokA-mediated biosynthesis of the nonaketide chain and leads to dihydromonacolin L. Covalently bound dihydromonacolin L is released from mokA by the mokD esterase. Conversion of dihydromonacolin L into monacolin L and then monacolin J is subsequently performed with the participation of molecular oxygen and P450 monoogygenase mokC. Finally, mokF performs the conversion of monacoline J to monacoline K through the addition of the side-chain diketide moiety (2R)-2-methylbutanoate produced by the diketide synthase mokB. This chain is Lovastatin diketide synthase mokB, found in Monascus pilosus (Red mold).